Here is a 64-residue protein sequence, read N- to C-terminus: UPF0337 protein SAB0772 (64 aa).

The interval 1–40 (MADESKFEQAKGNVKETIGNVTDNKNLENEGKEDKASGKA) is disordered. The span at 25–40 (KNLENEGKEDKASGKA) shows a compositional bias: basic and acidic residues.

Belongs to the UPF0337 (CsbD) family.

This is UPF0337 protein SAB0772 from Staphylococcus aureus (strain bovine RF122 / ET3-1).